Here is a 331-residue protein sequence, read N- to C-terminus: Ketol-acid reductoisomerase (NADP(+)) (331 aa).

Residues 2-182 enclose the KARI N-terminal Rossmann domain; it reads AQLFYDSDAD…GGTRAGILET (181 aa). NADP(+) contacts are provided by residues 25 to 28, serine 51, serine 53, and 83 to 86; these read YGSQ and DEFQ. Histidine 108 is an active-site residue. Glycine 134 contributes to the NADP(+) binding site. The region spanning 183–328 is the KARI C-terminal knotted domain; the sequence is NFKEETETDL…KGLRAMFSWL (146 aa). 4 residues coordinate Mg(2+): aspartate 191, glutamate 195, glutamate 227, and glutamate 231. Serine 252 is a binding site for substrate.

This sequence belongs to the ketol-acid reductoisomerase family. The cofactor is Mg(2+).

The catalysed reaction is (2R)-2,3-dihydroxy-3-methylbutanoate + NADP(+) = (2S)-2-acetolactate + NADPH + H(+). It catalyses the reaction (2R,3R)-2,3-dihydroxy-3-methylpentanoate + NADP(+) = (S)-2-ethyl-2-hydroxy-3-oxobutanoate + NADPH + H(+). It functions in the pathway amino-acid biosynthesis; L-isoleucine biosynthesis; L-isoleucine from 2-oxobutanoate: step 2/4. It participates in amino-acid biosynthesis; L-valine biosynthesis; L-valine from pyruvate: step 2/4. Involved in the biosynthesis of branched-chain amino acids (BCAA). Catalyzes an alkyl-migration followed by a ketol-acid reduction of (S)-2-acetolactate (S2AL) to yield (R)-2,3-dihydroxy-isovalerate. In the isomerase reaction, S2AL is rearranged via a Mg-dependent methyl migration to produce 3-hydroxy-3-methyl-2-ketobutyrate (HMKB). In the reductase reaction, this 2-ketoacid undergoes a metal-dependent reduction by NADPH to yield (R)-2,3-dihydroxy-isovalerate. The sequence is that of Ketol-acid reductoisomerase (NADP(+)) from Prochlorococcus marinus (strain MIT 9313).